The following is a 104-amino-acid chain: L-rhamnose mutarotase (104 aa).

Tyrosine 18 serves as a coordination point for substrate. Histidine 22 acts as the Proton donor in catalysis. Residues tyrosine 41 and 76–77 (WW) each bind substrate.

It belongs to the rhamnose mutarotase family. In terms of assembly, homodimer.

It localises to the cytoplasm. The catalysed reaction is alpha-L-rhamnose = beta-L-rhamnose. The protein operates within carbohydrate metabolism; L-rhamnose metabolism. In terms of biological role, involved in the anomeric conversion of L-rhamnose. This chain is L-rhamnose mutarotase, found in Shigella sonnei (strain Ss046).